The primary structure comprises 137 residues: Diacylglycerol kinase (137 aa).

A divalent metal cation is bound at residue Glu-42. The next 2 helical transmembrane spans lie at 49–67 and 73–89; these read LIAF…ATFF and AILF…NTAI. The Proton acceptor role is filled by Glu-83. Position 90 (Glu-90) interacts with a divalent metal cation. The chain crosses the membrane as a helical span at residues 112–132; it reads SFACLCLIVANGVYAAYVVIF.

Belongs to the bacterial diacylglycerol kinase family. Requires Mg(2+) as cofactor.

It is found in the cell inner membrane. The enzyme catalyses a 1,2-diacyl-sn-glycerol + ATP = a 1,2-diacyl-sn-glycero-3-phosphate + ADP + H(+). In terms of biological role, catalyzes the ATP-dependent phosphorylation of sn-l,2-diacylglycerol (DAG) to phosphatidic acid. Involved in the recycling of diacylglycerol produced as a by-product during membrane-derived oligosaccharide (MDO) biosynthesis. This chain is Diacylglycerol kinase (dgkA), found in Sinorhizobium sp.